A 571-amino-acid chain; its full sequence is Glutamine--tRNA ligase (571 aa).

A 'HIGH' region motif is present at residues 35-45 (PEPNGYLHIGH). ATP contacts are provided by residues 36–38 (EPN) and 42–48 (HIGHAKS). L-glutamine-binding residues include D68 and Y213. Residues T232, 262–263 (RL), and 270–272 (LSK) each bind ATP. Residues 269-273 (ILSKR) carry the 'KMSKS' region motif.

It belongs to the class-I aminoacyl-tRNA synthetase family. As to quaternary structure, monomer.

It is found in the cytoplasm. It carries out the reaction tRNA(Gln) + L-glutamine + ATP = L-glutaminyl-tRNA(Gln) + AMP + diphosphate. The polypeptide is Glutamine--tRNA ligase (Buchnera aphidicola subsp. Acyrthosiphon pisum (strain APS) (Acyrthosiphon pisum symbiotic bacterium)).